Here is a 296-residue protein sequence, read N- to C-terminus: Pyruvate synthase subunit PorB (296 aa).

Cysteine 17, cysteine 20, and cysteine 45 together coordinate [4Fe-4S] cluster. Positions 140–150 are enriched in polar residues; the sequence is TPFDASTTTTP. The interval 140–159 is disordered; that stretch reads TPFDASTTTTPAGKVSFGNP. Cysteine 210 is a [4Fe-4S] cluster binding site.

In terms of assembly, heterotetramer of one alpha, one beta, one delta and one gamma chain. The cofactor is [4Fe-4S] cluster.

It carries out the reaction 2 oxidized [2Fe-2S]-[ferredoxin] + pyruvate + CoA = 2 reduced [2Fe-2S]-[ferredoxin] + acetyl-CoA + CO2 + H(+). This Methanosarcina barkeri (strain Fusaro / DSM 804) protein is Pyruvate synthase subunit PorB (porB).